The sequence spans 312 residues: Polyamine aminopropyltransferase (312 aa).

The PABS domain occupies 7 to 247 (FFWVQEYFTP…GPLGFALAAQ (241 aa)). Residue glutamine 36 coordinates S-methyl-5'-thioadenosine. The spermidine site is built by histidine 67 and glutamate 95. Residues aspartate 115 and 147-148 (DA) contribute to the S-methyl-5'-thioadenosine site. Aspartate 165 (proton acceptor) is an active-site residue. Residue proline 174 coordinates S-methyl-5'-thioadenosine.

It belongs to the spermidine/spermine synthase family. As to quaternary structure, homodimer or homotetramer.

The protein resides in the cytoplasm. The catalysed reaction is S-adenosyl 3-(methylsulfanyl)propylamine + putrescine = S-methyl-5'-thioadenosine + spermidine + H(+). Its pathway is amine and polyamine biosynthesis; spermidine biosynthesis; spermidine from putrescine: step 1/1. In terms of biological role, catalyzes the irreversible transfer of a propylamine group from the amino donor S-adenosylmethioninamine (decarboxy-AdoMet) to putrescine (1,4-diaminobutane) to yield spermidine. This Synechococcus sp. (strain JA-2-3B'a(2-13)) (Cyanobacteria bacterium Yellowstone B-Prime) protein is Polyamine aminopropyltransferase.